Reading from the N-terminus, the 88-residue chain is Small ribosomal subunit protein bS20 (88 aa).

Residues 1–28 form a disordered region; sequence MANIKSQIKRNKTNEKARLRNKAVKSSL.

This sequence belongs to the bacterial ribosomal protein bS20 family.

Functionally, binds directly to 16S ribosomal RNA. The chain is Small ribosomal subunit protein bS20 from Streptomyces avermitilis (strain ATCC 31267 / DSM 46492 / JCM 5070 / NBRC 14893 / NCIMB 12804 / NRRL 8165 / MA-4680).